We begin with the raw amino-acid sequence, 44 residues long: DNA-directed RNA polymerase subunit Rpo12 (44 aa).

Zn(2+) is bound by residues Cys8, Cys22, and Cys25.

This sequence belongs to the archaeal Rpo12/eukaryotic RPC10 RNA polymerase subunit family. As to quaternary structure, part of the RNA polymerase complex. Requires Zn(2+) as cofactor.

It is found in the cytoplasm. The catalysed reaction is RNA(n) + a ribonucleoside 5'-triphosphate = RNA(n+1) + diphosphate. DNA-dependent RNA polymerase (RNAP) catalyzes the transcription of DNA into RNA using the four ribonucleoside triphosphates as substrates. The sequence is that of DNA-directed RNA polymerase subunit Rpo12 from Haloquadratum walsbyi (strain DSM 16790 / HBSQ001).